Consider the following 287-residue polypeptide: NADH-cytochrome b5 reductase 1 (287 aa).

A helical transmembrane segment spans residues 5–25 (FEALVTALVLAVSFIFIYGKF). Residues 41 to 145 (KDWQEFSLLT…RGPKGFYHYE (105 aa)) enclose the FAD-binding FR-type domain. FAD-binding positions include 125–142 (AELA…KGFY) and 151–183 (EIGM…RVCL).

The protein belongs to the flavoprotein pyridine nucleotide cytochrome reductase family. Monomer. Component of the 2-(3-amino-3-carboxypropyl)histidine synthase complex composed of DPH1, DPH2, DPH3 and a NADH-dependent reductase, predominantly CBR1. The cofactor is FAD.

It is found in the mitochondrion outer membrane. It catalyses the reaction 2 Fe(III)-[cytochrome b5] + NADH = 2 Fe(II)-[cytochrome b5] + NAD(+) + H(+). The enzyme catalyses 2 Fe(3+)-[Dph3] + NADH = 2 Fe(2+)-[Dph3] + NAD(+) + H(+). Its pathway is protein modification; peptidyl-diphthamide biosynthesis. Its function is as follows. NADH-dependent reductase for DPH3 and cytochrome b5. Required for the first step of diphthamide biosynthesis, a post-translational modification of histidine which occurs in elongation factor 2. DPH1 and DPH2 transfer a 3-amino-3-carboxypropyl (ACP) group from S-adenosyl-L-methionine (SAM) to a histidine residue, the reaction is assisted by a reduction system comprising DPH3 and a NADH-dependent reductase, predominantly CBR1. By reducing DPH3, also involved in the formation of the tRNA wobble base modification mcm5s 2U (5-methoxycarbonylmethyl-2-thiouridine), mediated by the elongator complex. The cytochrome b5/NADH cytochrome b5 reductase electron transfer system supports the catalytic activity of several sterol biosynthetic enzymes. This Eremothecium gossypii (strain ATCC 10895 / CBS 109.51 / FGSC 9923 / NRRL Y-1056) (Yeast) protein is NADH-cytochrome b5 reductase 1 (CBR1).